Reading from the N-terminus, the 329-residue chain is Pantothenate kinase (329 aa).

The disordered stretch occupies residues 1-22 (MPAQGPSHGELPPADAGRESSP). ATP is bound at residue 107–114 (GSVAVGKS).

It belongs to the prokaryotic pantothenate kinase family.

Its subcellular location is the cytoplasm. The enzyme catalyses (R)-pantothenate + ATP = (R)-4'-phosphopantothenate + ADP + H(+). It functions in the pathway cofactor biosynthesis; coenzyme A biosynthesis; CoA from (R)-pantothenate: step 1/5. In Nocardioides sp. (strain ATCC BAA-499 / JS614), this protein is Pantothenate kinase.